Consider the following 241-residue polypeptide: 15,16-dihydrobiliverdin:ferredoxin oxidoreductase (241 aa).

Positions 16–35 (RGGQPAAVPEGLEHCHSSKS) are disordered.

This sequence belongs to the HY2 family.

It catalyses the reaction 15,16-dihydrobiliverdin + oxidized 2[4Fe-4S]-[ferredoxin] = biliverdin IXalpha + reduced 2[4Fe-4S]-[ferredoxin] + 2 H(+). Functionally, catalyzes the two-electron reduction of biliverdin IX-alpha at the C15 methine bridge. This Synechococcus sp. (strain WH7803) protein is 15,16-dihydrobiliverdin:ferredoxin oxidoreductase.